The sequence spans 262 residues: MAIITMKSLLEAGVHFGHQVKRLDPRMKRFIFSERNEIHILDLQKTLQGIKDSYELVQRVIKDGKKVLFVGTKKQASEIIEQEARRSDMPYVNNRWLGGMLSNFNTIRKSVQKLKKLEKMEVDGTFDMISKKEISQLNREKSKLAKNLTGIKDMETLPGAIFIIDPKREQIAINEARKLKIPIISVVDTNCNPDVIDCPIPGNDDAIRSVALFTKIISDAILESDKEVGIQIIENLNEEDLMKEIEIKNDKSDSIEEGGNNL.

Belongs to the universal ribosomal protein uS2 family.

This Borreliella burgdorferi (strain ZS7) (Borrelia burgdorferi) protein is Small ribosomal subunit protein uS2.